The following is a 156-amino-acid chain: Arginine repressor (156 aa).

The protein belongs to the ArgR family.

It localises to the cytoplasm. The protein operates within amino-acid biosynthesis; L-arginine biosynthesis [regulation]. Its function is as follows. Regulates arginine biosynthesis genes. The sequence is that of Arginine repressor from Pectobacterium atrosepticum (strain SCRI 1043 / ATCC BAA-672) (Erwinia carotovora subsp. atroseptica).